The sequence spans 163 residues: Ribonuclease P protein subunit p25-like protein (163 aa).

Disordered regions lie at residues 1 to 22 (MEHY…PQLP) and 129 to 163 (NEYG…DTRF). Basic residues predominate over residues 154–163 (PRRRARDTRF).

Belongs to the histone-like Alba family.

Its subcellular location is the nucleus. Functionally, may be a component of ribonuclease P or MRP. This chain is Ribonuclease P protein subunit p25-like protein (RPP25L), found in Bos taurus (Bovine).